Here is a 506-residue protein sequence, read N- to C-terminus: GTPase Der (506 aa).

EngA-type G domains lie at 3-166 and 218-391; these read PVVA…GEQL and IKIA…ACAT. Residues 9–16, 56–60, 118–121, 224–231, 271–275, and 336–339 contribute to the GTP site; these read GRPNVGKS, DTGGI, NKTD, DTAGV, and NKWD. Residues 392-476 form the KH-like domain; it reads QKNSTSMLTR…PIRIQFQEGN (85 aa).

Belongs to the TRAFAC class TrmE-Era-EngA-EngB-Septin-like GTPase superfamily. EngA (Der) GTPase family. In terms of assembly, associates with the 50S ribosomal subunit.

Its function is as follows. GTPase that plays an essential role in the late steps of ribosome biogenesis. The protein is GTPase Der of Actinobacillus pleuropneumoniae serotype 7 (strain AP76).